Reading from the N-terminus, the 196-residue chain is Small ribosomal subunit protein uS4c (196 aa).

Positions 15–43 (LGALPGLTRKTPKSGSNQKKKFHSGKKEQ) are disordered. In terms of domain architecture, S4 RNA-binding spans 89 to 150 (MRLDNILFRL…NQRSKRLVQN (62 aa)).

It belongs to the universal ribosomal protein uS4 family. As to quaternary structure, part of the 30S ribosomal subunit. Contacts protein S5. The interaction surface between S4 and S5 is involved in control of translational fidelity.

The protein resides in the plastid. It localises to the chloroplast. In terms of biological role, one of the primary rRNA binding proteins, it binds directly to 16S rRNA where it nucleates assembly of the body of the 30S subunit. Functionally, with S5 and S12 plays an important role in translational accuracy. This is Small ribosomal subunit protein uS4c (rps4) from Bothriochloa ischaemum (Yellow bluestem).